We begin with the raw amino-acid sequence, 482 residues long: Uric acid transporter UacT (482 aa).

The Cytoplasmic portion of the chain corresponds to 1 to 29 (MSAIDSQLPSSSGQDRPTDEVDRILSPGK). A helical transmembrane segment spans residues 30–50 (LIILGLQHVLVMYAGAVAVPL). At 51–62 (MIGDRLGLSKEA) the chain is on the periplasmic side. Residues 63-83 (IAMLISSDLFCCGIVTLLQCI) form a helical membrane-spanning segment. Topologically, residues 84–92 (GIGRFMGIR) are cytoplasmic. The helical transmembrane segment at 93–113 (LPVIMSVTFAAVTPMIAIGMN) threads the bilayer. Residues 114–115 (PD) are Periplasmic-facing. A helical transmembrane segment spans residues 116 to 136 (IGLLGIFGATIAAGFITTLLA). Residues 137–142 (PLIGRL) lie on the Cytoplasmic side of the membrane. A helical transmembrane segment spans residues 143–163 (MPLFPPLVTGVVITSIGLSII). Topologically, residues 164-178 (QVGIDWAAGGKGNPQ) are periplasmic. The chain crosses the membrane as a helical span at residues 179 to 199 (YGNPVYLGISFAVLIFILLIT). Over 200 to 204 (RYAKG) the chain is Cytoplasmic. Residues 205–225 (FMSNVAVLLGIVFGFLLSWMM) traverse the membrane as a helical segment. At 226 to 261 (NEVNLSGLHDASWFAIVTPMSFGMPIFDPVSILTMT) the chain is on the periplasmic side. A helical transmembrane segment spans residues 262-282 (AVLIIVFIESMGMFLALGEIV). Residues 283 to 337 (GRKLSSHDIIRGLRVDGVGTMIGGTFNSFPHTSFSQNVGLVSVTRVHSRWVCISS) lie on the Cytoplasmic side of the membrane. The chain crosses the membrane as a helical span at residues 338 to 358 (GIILILFGMVPKMAVLVASIP). Position 359 (Gln-359) is a topological domain, periplasmic. Residues 360–380 (FVLGGAGLVMFGMVLATGIRI) form a helical membrane-spanning segment. Residues 381 to 392 (LSRCNYTTNRYN) are Cytoplasmic-facing. Residues 393 to 413 (LYIVAISLGVGMTPTLSHDFF) traverse the membrane as a helical segment. The Periplasmic segment spans residues 414–421 (SKLPAVLQ). The helical transmembrane segment at 422-442 (PLLHSGIMLATLSAVVLNVFF) threads the bilayer. The Cytoplasmic segment spans residues 443–482 (NGYQHHADLVKESVSDKDLKVRTVRMWLLMRKLKKNEHGE).

Belongs to the nucleobase:cation symporter-2 (NCS2) (TC 2.A.40) family.

Its subcellular location is the cell inner membrane. Its activity is regulated as follows. Inhibited in the presence of the protonophore carbonyl cyanide m-chlorophenyl hydrazone. Functionally, proton-dependent high-capacity transporter for uric acid. Also shows a low capacity for transport of xanthine at 37 degrees Celsius but not at 25 degrees Celsius. The chain is Uric acid transporter UacT (uacT) from Escherichia coli (strain K12).